Here is a 708-residue protein sequence, read N- to C-terminus: Capsid scaffolding protein (708 aa).

Residues His-63, Ser-132, and His-157 each act as charge relay system in the active site. Disordered regions lie at residues Ser-270–Pro-339, His-455–Arg-565, and Ala-593–Glu-620. The span at Pro-284 to Ser-293 shows a compositional bias: low complexity. Residues Ser-294–Pro-311 show a composition bias toward pro residues. Residues Ser-326 to Pro-339 are compositionally biased toward low complexity. Residues Ala-333–Gly-352 form an interaction with pAP region. A compositionally biased stretch (basic residues) spans Lys-498–Lys-513. 2 consecutive short sequence motifs (nuclear localization signal) follow at residues Lys-510–Thr-515 and Arg-537–Lys-543. Residues Ala-593–Thr-615 show a composition bias toward low complexity. The interval Pro-688–Glu-708 is interaction with major capsid protein.

It belongs to the herpesviridae capsid scaffolding protein family. As to quaternary structure, homomultimer. Interacts with major capsid protein. Exists in a monomer-dimer equilibrium with the dimer being the active species. In terms of processing, capsid scaffolding protein is cleaved by assemblin after formation of the spherical procapsid. As a result, the capsid obtains its mature, icosahedral shape. Cleavages occur at two or more sites: release (R-site) and maturation (M-site).

The protein resides in the host cytoplasm. Its subcellular location is the host nucleus. The enzyme catalyses Cleaves -Ala-|-Ser- and -Ala-|-Ala- bonds in the scaffold protein.. Acts as a scaffold protein by binding major capsid protein in the cytoplasm, inducing the nuclear localization of both proteins. Multimerizes in the nucleus such as major capsid protein forms the icosahedral T=16 capsid. Autocatalytic cleavage releases the assembly protein, and subsequently abolishes interaction with major capsid protein. Cleavages products are evicted from the capsid before or during DNA packaging. Functionally, protease that plays an essential role in virion assembly within the nucleus. Catalyzes the cleavage of the assembly protein after formation of the spherical procapsid. By that cleavage, the capsid matures and gains its icosahedral shape. The cleavage sites seem to include -Ala-Ser-, -Ala-Ala-, as well as Ala-Thr bonds. Assemblin and cleavages products are evicted from the capsid before or during DNA packaging. In terms of biological role, plays a major role in capsid assembly. Acts as a scaffold protein by binding major capsid protein. Multimerizes in the nucleus such as major capsid protein forms the icosahedral T=16 capsid. Cleaved by assemblin after capsid completion. The cleavages products are evicted from the capsid before or during DNA packaging. The chain is Capsid scaffolding protein (UL80) from Homo sapiens (Human).